We begin with the raw amino-acid sequence, 61 residues long: UPF0434 protein PSPA7_2181 (61 aa).

The protein belongs to the UPF0434 family.

The polypeptide is UPF0434 protein PSPA7_2181 (Pseudomonas paraeruginosa (strain DSM 24068 / PA7) (Pseudomonas aeruginosa (strain PA7))).